A 70-amino-acid polypeptide reads, in one-letter code: MPSVRVKENEPFEVAMRRFKRSIEKTGLLTELRAREFYEKPTTERKRKKAAAVKRHYKRLRSQMLPPKLY.

Belongs to the bacterial ribosomal protein bS21 family.

This is Small ribosomal subunit protein bS21 from Laribacter hongkongensis (strain HLHK9).